A 176-amino-acid chain; its full sequence is Neuropeptide-like protein 1 (176 aa).

Residues 1-19 form the signal peptide; sequence MKATFVLACLLVIAAVSHA. Positions 59–79 are disordered; the sequence is GKRSAEQNEQANKEDKATSDK. Positions 61 to 79 are enriched in basic and acidic residues; it reads RSAEQNEQANKEDKATSDK.

Its function is as follows. In AWC olfactory sensory neurons, required for the detection of preferred food sources. The sequence is that of Neuropeptide-like protein 1 (nlp-1) from Caenorhabditis elegans.